The sequence spans 169 residues: S-ribosylhomocysteine lyase (169 aa).

3 residues coordinate Fe cation: His54, His58, and Cys128.

The protein belongs to the LuxS family. In terms of assembly, homodimer. It depends on Fe cation as a cofactor.

It carries out the reaction S-(5-deoxy-D-ribos-5-yl)-L-homocysteine = (S)-4,5-dihydroxypentane-2,3-dione + L-homocysteine. Functionally, involved in the synthesis of autoinducer 2 (AI-2) which is secreted by bacteria and is used to communicate both the cell density and the metabolic potential of the environment. The regulation of gene expression in response to changes in cell density is called quorum sensing. Catalyzes the transformation of S-ribosylhomocysteine (RHC) to homocysteine (HC) and 4,5-dihydroxy-2,3-pentadione (DPD). The protein is S-ribosylhomocysteine lyase of Shewanella sediminis (strain HAW-EB3).